We begin with the raw amino-acid sequence, 400 residues long: Mannitol-1-phosphate 5-dehydrogenase (400 aa).

Residue 12–23 coordinates NAD(+); it reads AVHFGAGNIGRG. Lys-221 is an active-site residue.

The protein belongs to the mannitol dehydrogenase family. As to quaternary structure, monomer.

The enzyme catalyses D-mannitol 1-phosphate + NAD(+) = beta-D-fructose 6-phosphate + NADH + H(+). Catalyzes the NAD(H)-dependent interconversion of D-fructose 6-phosphate and D-mannitol 1-phosphate in the mannitol metabolic pathway. The protein is Mannitol-1-phosphate 5-dehydrogenase of Pyricularia oryzae (strain Y34) (Rice blast fungus).